The following is a 290-amino-acid chain: ATP synthase subunit a (290 aa).

A run of 7 helical transmembrane segments spans residues 54–74, 115–135, 136–156, 164–184, 201–221, 233–253, and 254–274; these read AVHL…ILLF, IAPL…LKWI, PVDY…KIVP, FGLS…VKGF, LVPF…LSLA, VVFI…NVPW, and AIFH…LTVV.

This sequence belongs to the ATPase A chain family. As to quaternary structure, F-type ATPases have 2 components, CF(1) - the catalytic core - and CF(0) - the membrane proton channel. CF(1) has five subunits: alpha(3), beta(3), gamma(1), delta(1), epsilon(1). CF(0) has three main subunits: a(1), b(2) and c(9-12). The alpha and beta chains form an alternating ring which encloses part of the gamma chain. CF(1) is attached to CF(0) by a central stalk formed by the gamma and epsilon chains, while a peripheral stalk is formed by the delta and b chains.

The protein resides in the cell inner membrane. Functionally, key component of the proton channel; it plays a direct role in the translocation of protons across the membrane. This is ATP synthase subunit a from Stutzerimonas stutzeri (strain A1501) (Pseudomonas stutzeri).